The primary structure comprises 667 residues: tRNA 5-methylaminomethyl-2-thiouridine biosynthesis bifunctional protein MnmC (667 aa).

Residues 1–241 are tRNA (mnm(5)s(2)U34)-methyltransferase; that stretch reads MHKLTFAQLS…KREMLCGEKA (241 aa). An FAD-dependent cmnm(5)s(2)U34 oxidoreductase region spans residues 268–667; it reads VGGGIASLFV…RKWLKGSKVV (400 aa).

This sequence in the N-terminal section; belongs to the methyltransferase superfamily. tRNA (mnm(5)s(2)U34)-methyltransferase family. The protein in the C-terminal section; belongs to the DAO family. The cofactor is FAD.

The protein resides in the cytoplasm. It carries out the reaction 5-aminomethyl-2-thiouridine(34) in tRNA + S-adenosyl-L-methionine = 5-methylaminomethyl-2-thiouridine(34) in tRNA + S-adenosyl-L-homocysteine + H(+). Catalyzes the last two steps in the biosynthesis of 5-methylaminomethyl-2-thiouridine (mnm(5)s(2)U) at the wobble position (U34) in tRNA. Catalyzes the FAD-dependent demodification of cmnm(5)s(2)U34 to nm(5)s(2)U34, followed by the transfer of a methyl group from S-adenosyl-L-methionine to nm(5)s(2)U34, to form mnm(5)s(2)U34. The protein is tRNA 5-methylaminomethyl-2-thiouridine biosynthesis bifunctional protein MnmC of Haemophilus ducreyi (strain 35000HP / ATCC 700724).